The sequence spans 269 residues: uncharacterized protein (269 aa).

The region spanning 152–197 (RYFSKPAYRNAFKANTIRATTAYKKVFNDPSLGSTYPLEVPLGKMS) is the RPE1 insert domain.

This is an uncharacterized protein from Rickettsia prowazekii (strain Madrid E).